The primary structure comprises 434 residues: Fez family zinc finger protein 2 (434 aa).

The short motif at serine 27–proline 42 is the Engrailed homology 1 repressor element. C2H2-type zinc fingers lie at residues phenylalanine 253–histidine 275, phenylalanine 281–histidine 303, histidine 309–histidine 331, phenylalanine 337–histidine 359, tyrosine 365–histidine 387, and phenylalanine 393–histidine 416.

The protein belongs to the krueppel C2H2-type zinc-finger protein family.

The protein resides in the nucleus. Its function is as follows. Transcription repressor. Component of the regulatory cascade that controls the development of dopaminergic (DA) and serotonergic (5HT) neurons. The protein is Fez family zinc finger protein 2 (fezf2) of Xenopus laevis (African clawed frog).